We begin with the raw amino-acid sequence, 76 residues long: MTDKFMPWIDELPNVDQELVAQRNAIAEKQRRADELMRQVERLRIEVMRESSRLEERAKQRWTFNEIDLAKFRAGH.

This sequence to E.coli KleA (KcrA1).

The sequence is that of Protein KleC (kleC) from Escherichia coli.